Consider the following 420-residue polypeptide: Glutamate dehydrogenase (420 aa).

Residue Lys-105 is part of the active site. 220-226 (GYGNAGY) lines the NAD(+) pocket.

It belongs to the Glu/Leu/Phe/Val dehydrogenases family. Homohexamer.

It localises to the cytoplasm. It carries out the reaction L-glutamate + NAD(+) + H2O = 2-oxoglutarate + NH4(+) + NADH + H(+). The catalysed reaction is L-glutamate + NADP(+) + H2O = 2-oxoglutarate + NH4(+) + NADPH + H(+). The chain is Glutamate dehydrogenase (gdhA) from Pyrococcus horikoshii (strain ATCC 700860 / DSM 12428 / JCM 9974 / NBRC 100139 / OT-3).